A 193-amino-acid polypeptide reads, in one-letter code: Thymidine kinase (193 aa).

Residues 9-16 (STMNAGKS) and 87-90 (DEAQ) contribute to the ATP site. E88 (proton acceptor) is an active-site residue. The Zn(2+) site is built by C145, C147, C182, and H185.

It belongs to the thymidine kinase family. Homotetramer.

The protein localises to the cytoplasm. The enzyme catalyses thymidine + ATP = dTMP + ADP + H(+). The chain is Thymidine kinase from Haemophilus influenzae (strain 86-028NP).